Reading from the N-terminus, the 336-residue chain is F420-dependent glucose-6-phosphate dehydrogenase (336 aa).

Position 39 (D39) interacts with coenzyme F420-(gamma-Glu)n. The active-site Proton donor is the H40. Coenzyme F420-(gamma-Glu)n is bound by residues T76 and 107–108 (TG). E109 serves as the catalytic Proton acceptor. Residues N112, 177–178 (GG), and 180–181 (VV) each bind coenzyme F420-(gamma-Glu)n. T195, K198, K259, and R283 together coordinate substrate.

This sequence belongs to the F420-dependent glucose-6-phosphate dehydrogenase family. As to quaternary structure, homodimer.

The enzyme catalyses oxidized coenzyme F420-(gamma-L-Glu)(n) + D-glucose 6-phosphate + H(+) = 6-phospho-D-glucono-1,5-lactone + reduced coenzyme F420-(gamma-L-Glu)(n). In terms of biological role, catalyzes the coenzyme F420-dependent oxidation of glucose 6-phosphate (G6P) to 6-phosphogluconolactone. Appears to have a role in resistance to oxidative stress, via its consumption of G6P that serves as a source of reducing power to combat oxidative stress in mycobacteria. Cannot use NAD, NADP, FAD or FMN instead of coenzyme F420 as an electron acceptor. Exhibits nearly no activity with D-mannose-6-phosphate or D-fructose-6-phosphate as substrate. In Mycolicibacterium smegmatis (strain ATCC 700084 / mc(2)155) (Mycobacterium smegmatis), this protein is F420-dependent glucose-6-phosphate dehydrogenase (fgd).